A 106-amino-acid chain; its full sequence is UPF0060 membrane protein R01043 (106 aa).

Transmembrane regions (helical) follow at residues 5 to 25 (AIYF…WSWL), 31 to 51 (ALWL…LTMV), 61 to 81 (AAYG…AEGV), and 85 to 105 (HWDM…LAGP).

This sequence belongs to the UPF0060 family.

The protein localises to the cell inner membrane. This is UPF0060 membrane protein R01043 from Rhizobium meliloti (strain 1021) (Ensifer meliloti).